A 513-amino-acid polypeptide reads, in one-letter code: Transmembrane protein 151B (513 aa).

The interval 1–29 is disordered; sequence MSPAAPVTESSAAEVHREQTDAPREPQRP. The segment covering 14–28 has biased composition (basic and acidic residues); the sequence is EVHREQTDAPREPQR. A run of 3 helical transmembrane segments spans residues 46-66, 93-113, and 274-294; these read CLLL…CQVT, YIYI…VECW, and LPWY…LSWP. N-linked (GlcNAc...) asparagine glycosylation is found at asparagine 366, asparagine 418, and asparagine 505.

The protein belongs to the TMEM151 family.

Its subcellular location is the membrane. The chain is Transmembrane protein 151B (tmem151b) from Danio rerio (Zebrafish).